The sequence spans 487 residues: Glutamyl-tRNA(Gln) amidotransferase subunit A (487 aa).

Active-site charge relay system residues include lysine 79 and serine 154. Residue serine 178 is the Acyl-ester intermediate of the active site.

Belongs to the amidase family. GatA subfamily. Heterotrimer of A, B and C subunits.

It catalyses the reaction L-glutamyl-tRNA(Gln) + L-glutamine + ATP + H2O = L-glutaminyl-tRNA(Gln) + L-glutamate + ADP + phosphate + H(+). Allows the formation of correctly charged Gln-tRNA(Gln) through the transamidation of misacylated Glu-tRNA(Gln) in organisms which lack glutaminyl-tRNA synthetase. The reaction takes place in the presence of glutamine and ATP through an activated gamma-phospho-Glu-tRNA(Gln). This is Glutamyl-tRNA(Gln) amidotransferase subunit A from Heliobacterium modesticaldum (strain ATCC 51547 / Ice1).